Here is a 434-residue protein sequence, read N- to C-terminus: APETALA2-like protein 2 (434 aa).

Residues 1-116 (MLLDLNVESP…KTRRGPRSRS (116 aa)) form a disordered region. A compositionally biased stretch (low complexity) spans 12-23 (RSGTSSSSVLNS). Residues 25-38 (DAGGGGGGGGGGGL) show a composition bias toward gly residues. Over residues 72–87 (LPPPPPAAPSPAPAWQ) the composition is skewed to pro residues. Residues 104–113 (VAKKTRRGPR) are compositionally biased toward basic residues. Residues 106–115 (KKTRRGPRSR) carry the Nuclear localization signal motif. 2 DNA-binding regions (AP2/ERF) span residues 118–174 (QYRG…INFN) and 210–267 (KFRG…TNFE). The EAR motif lies at 291–295 (LDLRI).

This sequence belongs to the AP2/ERF transcription factor family. AP2 subfamily. As to quaternary structure, may form homodimer. Interacts with TPR2/ASP1. In terms of tissue distribution, highly expressed in developing panicles and in young seedlings. Present at low levels at all developmental stages.

Its subcellular location is the nucleus. Its function is as follows. Probable transcription factor. Involved in spikelet transition. Together with SNB, controls synergistically inflorescence architecture and floral meristem establishment via the regulation of spatio-temporal expression of B- and E-function floral organ identity genes in the lodicules and of spikelet meristem genes. Prevents lemma and palea elongation as well as grain growth. The chain is APETALA2-like protein 2 from Oryza sativa subsp. japonica (Rice).